A 1280-amino-acid chain; its full sequence is Fibronectin type III domain-containing protein (1280 aa).

An N-terminal signal peptide occupies residues M1–A19. Topologically, residues Q20–A1156 are extracellular. 5 disulfides stabilise this stretch: C58–C111, C268–C321, C369–C417, C460–C511, and C553–C604. 5 consecutive Fibronectin type-III domains span residues P628 to F722, P730 to F824, P830 to D933, P939 to T1033, and P1039 to D1131. A compositionally biased stretch (polar residues) spans Y1118 to S1130. The interval Y1118–V1144 is disordered. A helical membrane pass occupies residues W1157–L1177. At Y1178–V1280 the chain is on the cytoplasmic side. The tract at residues D1206–V1280 is disordered. The span at D1262–P1273 shows a compositional bias: basic and acidic residues.

As to expression, component of the acid-insoluble organic matrix of the aragonitic skeleton (at protein level).

It is found in the membrane. The protein is Fibronectin type III domain-containing protein of Acropora millepora (Staghorn coral).